Reading from the N-terminus, the 294-residue chain is uncharacterized protein (294 aa).

Disordered stretches follow at residues 1-30 (MKRQ…EVSH), 51-86 (ALSD…KKRP), and 250-294 (DELN…STST). Polar residues-rich tracts occupy residues 7-26 (QDSM…TPTK), 66-81 (PYSS…NSST), and 255-277 (PMNN…NLPT).

Its subcellular location is the nucleus. This is an uncharacterized protein from Schizosaccharomyces pombe (strain 972 / ATCC 24843) (Fission yeast).